We begin with the raw amino-acid sequence, 445 residues long: Histidinol dehydrogenase (445 aa).

NAD(+)-binding residues include tyrosine 134, glutamine 198, and asparagine 226. Positions 249, 271, and 274 each coordinate substrate. Residues glutamine 271 and histidine 274 each coordinate Zn(2+). Residues glutamate 340 and histidine 341 each act as proton acceptor in the active site. Substrate-binding residues include histidine 341, aspartate 374, glutamate 428, and histidine 433. Aspartate 374 is a binding site for Zn(2+). Histidine 433 contacts Zn(2+).

It belongs to the histidinol dehydrogenase family. Requires Zn(2+) as cofactor.

It carries out the reaction L-histidinol + 2 NAD(+) + H2O = L-histidine + 2 NADH + 3 H(+). It participates in amino-acid biosynthesis; L-histidine biosynthesis; L-histidine from 5-phospho-alpha-D-ribose 1-diphosphate: step 9/9. In terms of biological role, catalyzes the sequential NAD-dependent oxidations of L-histidinol to L-histidinaldehyde and then to L-histidine. The chain is Histidinol dehydrogenase from Nocardia farcinica (strain IFM 10152).